The sequence spans 570 residues: Sulfite reductase [NADPH] hemoprotein beta-component (570 aa).

The [4Fe-4S] cluster site is built by Cys-434, Cys-440, Cys-479, and Cys-483. Cys-483 is a binding site for siroheme.

The protein belongs to the nitrite and sulfite reductase 4Fe-4S domain family. In terms of assembly, alpha(8)-beta(8). The alpha component is a flavoprotein, the beta component is a hemoprotein. Siroheme is required as a cofactor. The cofactor is [4Fe-4S] cluster.

It carries out the reaction hydrogen sulfide + 3 NADP(+) + 3 H2O = sulfite + 3 NADPH + 4 H(+). Its pathway is sulfur metabolism; hydrogen sulfide biosynthesis; hydrogen sulfide from sulfite (NADPH route): step 1/1. Its function is as follows. Component of the sulfite reductase complex that catalyzes the 6-electron reduction of sulfite to sulfide. This is one of several activities required for the biosynthesis of L-cysteine from sulfate. The polypeptide is Sulfite reductase [NADPH] hemoprotein beta-component (Escherichia coli (strain ATCC 8739 / DSM 1576 / NBRC 3972 / NCIMB 8545 / WDCM 00012 / Crooks)).